Reading from the N-terminus, the 121-residue chain is Large ribosomal subunit protein uL18 (121 aa).

This sequence belongs to the universal ribosomal protein uL18 family. Part of the 50S ribosomal subunit; part of the 5S rRNA/L5/L18/L25 subcomplex. Contacts the 5S and 23S rRNAs.

In terms of biological role, this is one of the proteins that bind and probably mediate the attachment of the 5S RNA into the large ribosomal subunit, where it forms part of the central protuberance. The sequence is that of Large ribosomal subunit protein uL18 from Buchnera aphidicola subsp. Baizongia pistaciae (strain Bp).